We begin with the raw amino-acid sequence, 419 residues long: Keratin, type II cytoskeletal I (419 aa).

Residues 1 to 16 (KGSTKRANLDPLFEKY) are linker 1. An IF rod domain is found at 1 to 275 (KGSTKRANLD…YMLEGEEGRM (275 aa)). The tract at residues 17–108 (ISDLKRYLDN…TLFAAELSQV (92 aa)) is coil 1B. Residues 109–132 (HDQVTDTSVVLTMDNNRDLNLDSI) form a linker 12 region. The interval 133–271 (IKEVKCQYEQ…STYRYMLEGE (139 aa)) is coil 2. The tail stretch occupies residues 272-419 (EGRMSGQISN…STTSTTKRSY (148 aa)).

Belongs to the intermediate filament family. As to quaternary structure, heterotetramer of two type I and two type II keratins.

This chain is Keratin, type II cytoskeletal I, found in Xenopus laevis (African clawed frog).